Reading from the N-terminus, the 536-residue chain is Global nitrogen regulator NrpR (536 aa).

The tract at residues 7-72 (VEILSILSEA…EITEKGIEEL (66 aa)) is winged helix-turn-helix. NRD regions lie at residues 80–314 (RIGS…KGKF) and 315–536 (KVTP…YDDI).

It belongs to the NrpR family. As to quaternary structure, homotetramer. Binds to a single operator as a dimer and cooperatively to two operators as a dimer pair.

Its activity is regulated as follows. Under nitrogen limitation, binding of the intracellular nitrogen metabolite 2-oxoglutarate to NrpR decreases the binding affinity of NrpR to DNA, leading to initiation of transcription. Functionally, transcriptional repressor of nitrogen fixation and assimilation genes. Binds to two tandem operators in the glnA and nif promoters, thereby blocking transcription of the genes. The chain is Global nitrogen regulator NrpR from Methanococcus maripaludis (strain DSM 14266 / JCM 13030 / NBRC 101832 / S2 / LL).